The following is a 407-amino-acid chain: Argininosuccinate synthase (407 aa).

Alanine 10–serine 18 provides a ligand contact to ATP. Positions 88 and 93 each coordinate L-citrulline. Glycine 118 is an ATP binding site. Threonine 120, asparagine 124, and aspartate 125 together coordinate L-aspartate. Asparagine 124 contributes to the L-citrulline binding site. L-citrulline contacts are provided by arginine 128, serine 177, serine 186, glutamate 263, and tyrosine 275.

This sequence belongs to the argininosuccinate synthase family. Type 1 subfamily. As to quaternary structure, homotetramer.

The protein localises to the cytoplasm. It catalyses the reaction L-citrulline + L-aspartate + ATP = 2-(N(omega)-L-arginino)succinate + AMP + diphosphate + H(+). It functions in the pathway amino-acid biosynthesis; L-arginine biosynthesis; L-arginine from L-ornithine and carbamoyl phosphate: step 2/3. In Clostridium botulinum (strain Eklund 17B / Type B), this protein is Argininosuccinate synthase.